A 45-amino-acid polypeptide reads, in one-letter code: Ice-structuring protein SS-8 (45 aa).

Met-1 bears the Blocked amino end (Met) mark. 3 repeats span residues 9–21, 22–33, and 34–45; these read KAAR…ALAA, KTAADAAAKAAA, and KAAAIAAAAASA.

This sequence belongs to the type-I AFP family.

Functionally, antifreeze proteins lower the blood freezing point. The polypeptide is Ice-structuring protein SS-8 (Myoxocephalus scorpius (Shorthorn sculpin)).